A 901-amino-acid chain; its full sequence is Serine/threonine-protein kinase-like protein CR4 (901 aa).

Positions methionine 1–glycine 22 are cleaved as a signal peptide. 7 repeat units span residues valine 31–serine 66, phenylalanine 70–glutamine 105, leucine 123–glycine 158, valine 160–glycine 193, phenylalanine 201–threonine 234, methionine 251–proline 285, and valine 290–proline 328. A 7 X 36 AA repeats region spans residues valine 31–proline 328. Residues asparagine 149 and asparagine 177 are each glycosylated (N-linked (GlcNAc...) asparagine). Asparagine 280 is a glycosylation site (N-linked (GlcNAc...) asparagine). Residues serine 335–cysteine 389 form a TNFR-Cys repeat. Intrachain disulfides connect cysteine 336-cysteine 364, cysteine 367-cysteine 381, and cysteine 371-cysteine 389. N-linked (GlcNAc...) asparagine glycosylation occurs at asparagine 382. A helical membrane pass occupies residues isoleucine 423 to cysteine 443. One can recognise a Protein kinase domain in the interval phenylalanine 504–leucine 781. ATP-binding positions include valine 510–valine 518 and lysine 532. Residue aspartate 633 is the Proton acceptor of the active site. Residues valine 845–phenylalanine 901 form a disordered region. Residues alanine 889–phenylalanine 901 show a composition bias toward polar residues.

It belongs to the protein kinase superfamily. Ser/Thr protein kinase family. Homodimer. Post-translationally, autophosphorylated. In terms of tissue distribution, specifically expressed in the epidermal cells of paleas and lemmas.

The protein localises to the cell membrane. Its subcellular location is the endosome. It is found in the multivesicular body membrane. The catalysed reaction is L-seryl-[protein] + ATP = O-phospho-L-seryl-[protein] + ADP + H(+). It catalyses the reaction L-threonyl-[protein] + ATP = O-phospho-L-threonyl-[protein] + ADP + H(+). In terms of biological role, receptor protein kinase. Could play a role in a differentiation signal. Controls formative cell division in meristems. Regulates epidermal cell differentiation in many organs. During floral organogenesis, required to maintain the interlocking of the palea and lemma, and fertility. Triggers culm elongation. The chain is Serine/threonine-protein kinase-like protein CR4 from Oryza sativa subsp. japonica (Rice).